Here is a 173-residue protein sequence, read N- to C-terminus: UPF0316 protein Amet_0954 (173 aa).

3 helical membrane-spanning segments follow: residues 3-23 (LVLG…MGTV), 38-58 (AIGF…LEAL), and 61-81 (PVNI…GIYI).

Belongs to the UPF0316 family.

It localises to the cell membrane. This is UPF0316 protein Amet_0954 from Alkaliphilus metalliredigens (strain QYMF).